We begin with the raw amino-acid sequence, 343 residues long: MSSIDLKSKFLKVYDTLKSELINDPAFEFDDDSRQWIEKMLDYNVPGGKLNRGLSVVDSYQLLKGGELSDDEIFLSSALGWCIEWLQAYFLVLDDIMDESHTRRGQPCWFRLPKVGMIAANDGILLRNHVPRILKKHFRGKPYYVDLVDLFNEVEFQTASGQMIDLITTLVGEKDLSKYSLSIHRRIVQYKTAYYSFYLPVACALLMFGEDLDKHVEVKNVLVEMGTYFQVQDDYLDCFGAPEVIGKIGTDIEDFKCSWLVVKALELANEEQKKVLHENYGKKDPASVAKVKEVYHTLNLQAVFEDYEATSYKKLITSIENHPSKAVQAVLKSFLGKIYKRQK.

Isopentenyl diphosphate is bound by residues Lys49, Arg52, and Gln87. Mg(2+) contacts are provided by Asp94 and Asp98. Arg103 contributes to the dimethylallyl diphosphate binding site. Arg104 is a binding site for isopentenyl diphosphate. The dimethylallyl diphosphate site is built by Lys191, Thr192, Gln230, Lys247, and Lys256.

It belongs to the FPP/GGPP synthase family. The cofactor is Mg(2+). As to expression, expressed both in apical and sub-apical cells of glandular secretory trichomes.

It is found in the cytoplasm. It localises to the nucleus. It carries out the reaction isopentenyl diphosphate + dimethylallyl diphosphate = (2E)-geranyl diphosphate + diphosphate. The catalysed reaction is isopentenyl diphosphate + (2E)-geranyl diphosphate = (2E,6E)-farnesyl diphosphate + diphosphate. Its pathway is isoprenoid biosynthesis; farnesyl diphosphate biosynthesis; farnesyl diphosphate from geranyl diphosphate and isopentenyl diphosphate: step 1/1. The protein operates within sesquiterpene biosynthesis. It participates in isoprenoid biosynthesis; geranyl diphosphate biosynthesis; geranyl diphosphate from dimethylallyl diphosphate and isopentenyl diphosphate: step 1/1. Involved in the biosynthesis of the antimalarial endoperoxide artemisinin. Catalyzes the sequential condensation of isopentenyl pyrophosphate with the allylic pyrophosphates, dimethylallyl pyrophosphate, and then with the resultant geranylpyrophosphate to the ultimate product farnesyl pyrophosphate. Promotes anti-malarial and antimicrobial (toward Gram-positive bacteria B.subtilis and S.aureus) activities of plant crude extract probably by triggering artemisinin levels. The protein is Farnesyl pyrophosphate synthase of Artemisia annua (Sweet wormwood).